The chain runs to 2769 residues: Teneurin-4 (2769 aa).

The segment covering 1 to 22 (MDVKERKPYRSLTRRRDAERRY) has biased composition (basic and acidic residues). Residues 1–45 (MDVKERKPYRSLTRRRDAERRYTSSSADSEEGKAPQKSYSSSETL) are disordered. Positions 1 to 341 (MDVKERKPYR…KPSKYCNWKC (341 aa)) constitute a Teneurin N-terminal domain. Residues 1–345 (MDVKERKPYR…YCNWKCAALS (345 aa)) are Cytoplasmic-facing. Position 124 is a phosphoserine (serine 124). Residues 130–233 (RLWGRSTRSG…PPAGGAQEPA (104 aa)) form a disordered region. A compositionally biased stretch (low complexity) spans 134 to 155 (RSTRSGRSSCLSSRANSNLTLT). Residues 156-166 (DTEHENTETDH) are compositionally biased toward basic and acidic residues. Threonine 178 bears the Phosphothreonine mark. The span at 187 to 211 (HTPNQHHAASINSLNRGNFTPRSNP) shows a compositional bias: polar residues. The chain crosses the membrane as a helical span at residues 346–366 (AIVISATLVILLAYFVAMHLF). Topologically, residues 367–2769 (GLNWHLQPME…FMRQSEMGRR (2403 aa)) are extracellular. The interval 400–426 (PSGGTGLETPDRKGKGTTEGKPSSFFP) is disordered. Over residues 408–417 (TPDRKGKGTT) the composition is skewed to basic and acidic residues. The N-linked (GlcNAc...) asparagine glycan is linked to asparagine 467. The disordered stretch occupies residues 507–526 (ARSLEGTPRQSRGTVPPSSH). Over residues 514–526 (PRQSRGTVPPSSH) the composition is skewed to polar residues. EGF-like domains lie at 562–593 (SVDN…PDCG), 594–624 (RASC…AECD), 626–658 (PTNQ…ESCE), 659–690 (EVDC…TNCE), 692–725 (PRAT…HDCS), 726–757 (IEIC…ACDQ), 758–787 (RACH…EHCT), and 788–831 (IAHY…AGCD). Disulfide bonds link cysteine 566–cysteine 576, cysteine 570–cysteine 581, cysteine 583–cysteine 592, cysteine 601–cysteine 612, cysteine 614–cysteine 623, cysteine 630–cysteine 641, cysteine 635–cysteine 646, cysteine 648–cysteine 657, cysteine 662–cysteine 673, cysteine 667–cysteine 678, cysteine 680–cysteine 689, cysteine 700–cysteine 713, cysteine 715–cysteine 724, cysteine 729–cysteine 739, cysteine 733–cysteine 744, cysteine 746–cysteine 755, cysteine 760–cysteine 770, cysteine 764–cysteine 775, cysteine 777–cysteine 786, cysteine 800–cysteine 810, cysteine 804–cysteine 819, and cysteine 821–cysteine 830. Asparagine 940 and asparagine 1259 each carry an N-linked (GlcNAc...) asparagine glycan. 5 NHL repeats span residues 1216–1259 (SCPS…PSGN), 1264–1308 (LELR…IKST), 1334–1378 (TRCG…NGII), 1393–1444 (LSCD…VAGR), and 1523–1566 (CFSG…IRKN). A YD 1 repeat occupies 1576-1595 (YELSSPIDQELYLFDTTGKH). Residue asparagine 1609 is glycosylated (N-linked (GlcNAc...) asparagine). YD repeat units lie at residues 1612-1632 (YTGD…VNVR), 1675-1694 (YHGN…WTTF), and 1695-1717 (YEYD…SSFR). Asparagine 1705, asparagine 1741, asparagine 1799, and asparagine 1884 each carry an N-linked (GlcNAc...) asparagine glycan. YD repeat units follow at residues 1887–1906 (YSPG…ERME), 1928–1946 (YLEK…YIFE), 1947–1967 (FDKN…QTLE), 1974–1991 (YYRN…VIQD), 1992–2013 (FTED…VIYK), 2014–2031 (YGKL…TKVS), 2034–2054 (YDET…FTCT), 2057–2077 (YRQI…EGMV), 2085–2104 (YDNS…TPLP), 2110–2127 (YDDV…GVIY), 2128–2154 (YDIN…MKEV), 2156–2169 (YEIF…MTVQ), 2170–2193 (YDNM…TRYS), 2196–2216 (YDAD…WRYS), 2217–2237 (YDLN…LTPL), 2239–2259 (YDIR…DEDG), 2271–2291 (YNSA…SVRY), and 2293–2313 (YDGL…LQFF). Asparagine 1985 is a glycosylation site (N-linked (GlcNAc...) asparagine). The N-linked (GlcNAc...) asparagine glycan is linked to asparagine 2188. Asparagine 2328 carries an N-linked (GlcNAc...) asparagine glycan. The stretch at 2339-2380 (YDLQGHLFAMELSSGDEFYIACDNIGTPLAVFSGTGLMIKQI) is one YD 23 repeat. Asparagine 2646 is a glycosylation site (N-linked (GlcNAc...) asparagine).

The protein belongs to the tenascin family. Teneurin subfamily. In terms of assembly, homodimer; disulfide-linked. May also form heterodimer with either TENM1 or TENM2 or TENM3.

The protein resides in the cell membrane. Its subcellular location is the cell projection. It localises to the nucleus. The protein localises to the cytoplasm. Involved in neural development, regulating the establishment of proper connectivity within the nervous system. Plays a role in the establishment of the anterior-posterior axis during gastrulation. Regulates the differentiation and cellular process formation of oligodendrocytes and myelination of small-diameter axons in the central nervous system (CNS). Promotes activation of focal adhesion kinase. May function as a cellular signal transducer. The protein is Teneurin-4 (TENM4) of Homo sapiens (Human).